Consider the following 679-residue polypeptide: Methionine--tRNA ligase (679 aa).

C147, C150, C160, and C163 together coordinate Zn(2+). A 'KMSKS' region motif is present at residues 332-336 (KISTS). T335 contacts ATP. Residues 578-679 (DFMKLDIRVG…REVKPGSEVK (102 aa)) enclose the tRNA-binding domain.

It belongs to the class-I aminoacyl-tRNA synthetase family. MetG type 1 subfamily. In terms of assembly, homodimer. The cofactor is Zn(2+).

Its subcellular location is the cytoplasm. The catalysed reaction is tRNA(Met) + L-methionine + ATP = L-methionyl-tRNA(Met) + AMP + diphosphate. In terms of biological role, is required not only for elongation of protein synthesis but also for the initiation of all mRNA translation through initiator tRNA(fMet) aminoacylation. This chain is Methionine--tRNA ligase, found in Bacteroides fragilis (strain YCH46).